Reading from the N-terminus, the 272-residue chain is Phosphoribosylformylglycinamidine synthase subunit PurQ (272 aa).

Residues 8-272 (VLVMSGYGIN…FKNAVEYFNK (265 aa)) enclose the Glutamine amidotransferase type-1 domain. Catalysis depends on C98, which acts as the Nucleophile. Residues H225, E227, and E235 contribute to the active site.

Part of the FGAM synthase complex composed of 1 PurL, 1 PurQ and 2 PurS subunits.

It localises to the cytoplasm. It carries out the reaction N(2)-formyl-N(1)-(5-phospho-beta-D-ribosyl)glycinamide + L-glutamine + ATP + H2O = 2-formamido-N(1)-(5-O-phospho-beta-D-ribosyl)acetamidine + L-glutamate + ADP + phosphate + H(+). The catalysed reaction is L-glutamine + H2O = L-glutamate + NH4(+). It participates in purine metabolism; IMP biosynthesis via de novo pathway; 5-amino-1-(5-phospho-D-ribosyl)imidazole from N(2)-formyl-N(1)-(5-phospho-D-ribosyl)glycinamide: step 1/2. Its function is as follows. Part of the phosphoribosylformylglycinamidine synthase complex involved in the purines biosynthetic pathway. Catalyzes the ATP-dependent conversion of formylglycinamide ribonucleotide (FGAR) and glutamine to yield formylglycinamidine ribonucleotide (FGAM) and glutamate. The FGAM synthase complex is composed of three subunits. PurQ produces an ammonia molecule by converting glutamine to glutamate. PurL transfers the ammonia molecule to FGAR to form FGAM in an ATP-dependent manner. PurS interacts with PurQ and PurL and is thought to assist in the transfer of the ammonia molecule from PurQ to PurL. This chain is Phosphoribosylformylglycinamidine synthase subunit PurQ, found in Methanococcus maripaludis (strain DSM 14266 / JCM 13030 / NBRC 101832 / S2 / LL).